Consider the following 538-residue polypeptide: MAAKEVRFHDNARERIVNGVNVLADAVKVTLGPKGRNVLLARSFGAPHITKDGVSVAKEIELKDPFENMGAQMVKEVASKTADVAGDGTTTATVLAQAIVQEGMKYVASGMNPMDLKRGIDKAVHAVIKELQTLSKPVTNSKETAQVAALSANSDEAIGKIIADAMDKVGKEGVITVEDGKSLDNELAVVEGMQFDRGYLSPYFITDPEKQTAVLEDPLVLLYDKKISNIRDLLPVLEQVAKAGKPLLIVAEDVEGEALATLVVNSMRGILKVAAVKAPGFGDRRKAMLEDIAILTGGTVIAEETGLTLEKAGLAELGSAKRVEIGKENTTIIDGAGDKAKIDARVQAIRAQIDAATSDYDREKLQERVAKLSGGVAVIRIGAATEVEMKEKKDRVDDALHATRAAVEEGIVAGGGVALLRARAHIKELKGDNPDQDAGIQIVLRALEAPLRAIAANAGDEPSVIVNKVLEGKGNHGYNAASGQFGDLVEMGVIDPTKVTRTALQNAASIASLILTTDATVAEAGQDSKAKAPAELDY.

Residues 30-33 (TLGP), Lys-51, 87-91 (DGTTT), Gly-415, 479-481 (NAA), and Asp-495 contribute to the ATP site.

Belongs to the chaperonin (HSP60) family. As to quaternary structure, forms a cylinder of 14 subunits composed of two heptameric rings stacked back-to-back. Interacts with the co-chaperonin GroES.

The protein resides in the cytoplasm. It carries out the reaction ATP + H2O + a folded polypeptide = ADP + phosphate + an unfolded polypeptide.. Functionally, together with its co-chaperonin GroES, plays an essential role in assisting protein folding. The GroEL-GroES system forms a nano-cage that allows encapsulation of the non-native substrate proteins and provides a physical environment optimized to promote and accelerate protein folding. This Chromobacterium violaceum (strain ATCC 12472 / DSM 30191 / JCM 1249 / CCUG 213 / NBRC 12614 / NCIMB 9131 / NCTC 9757 / MK) protein is Chaperonin GroEL 1.